Consider the following 96-residue polypeptide: Large ribosomal subunit protein bL21 (96 aa).

It belongs to the bacterial ribosomal protein bL21 family. As to quaternary structure, part of the 50S ribosomal subunit. Contacts protein L20.

Functionally, this protein binds to 23S rRNA in the presence of protein L20. The polypeptide is Large ribosomal subunit protein bL21 (Chlorobium chlorochromatii (strain CaD3)).